We begin with the raw amino-acid sequence, 321 residues long: Putative glucan endo-1,3-beta-glucosidase GVI (321 aa).

The signal sequence occupies residues 1-6 (LAGVEG). The active-site Proton donor is the E100. E241 (nucleophile) is an active-site residue.

This sequence belongs to the glycosyl hydrolase 17 family.

It carries out the reaction Hydrolysis of (1-&gt;3)-beta-D-glucosidic linkages in (1-&gt;3)-beta-D-glucans.. In terms of biological role, may provide a degree of protection against microbial invasion of germinated barley grain through its ability to degrade fungal cell wall polysaccharides. The protein is Putative glucan endo-1,3-beta-glucosidase GVI of Hordeum vulgare (Barley).